Reading from the N-terminus, the 1289-residue chain is uncharacterized protein (1289 aa).

The region spanning 615 to 733 (LDMYDVLKEL…DGMLSYSAQL (119 aa)) is the MHD1 domain. Residues 745-774 (DEPSYSLESSDTRSSLSLNNANVNHEKSRS) are disordered. Residues 748–762 (SYSLESSDTRSSLSL) are compositionally biased toward low complexity. The 133-residue stretch at 834 to 966 (AQYHSSHNLE…DDGFPIDFSL (133 aa)) folds into the C2 domain. The MHD2 domain occupies 1044 to 1184 (YDAILPLFDY…KSVSELKDEV (141 aa)).

The protein localises to the cytoplasm. This is an uncharacterized protein from Saccharomyces cerevisiae (strain ATCC 204508 / S288c) (Baker's yeast).